The following is a 158-amino-acid chain: 6,7-dimethyl-8-ribityllumazine synthase (158 aa).

5-amino-6-(D-ribitylamino)uracil contacts are provided by residues phenylalanine 22, 57–59 (AYE), and 84–86 (TVI). 89–90 (GT) provides a ligand contact to (2S)-2-hydroxy-3-oxobutyl phosphate. The active-site Proton donor is histidine 92. Phenylalanine 117 contacts 5-amino-6-(D-ribitylamino)uracil. A (2S)-2-hydroxy-3-oxobutyl phosphate-binding site is contributed by arginine 131.

This sequence belongs to the DMRL synthase family. As to quaternary structure, forms an icosahedral capsid composed of 60 subunits, arranged as a dodecamer of pentamers.

The enzyme catalyses (2S)-2-hydroxy-3-oxobutyl phosphate + 5-amino-6-(D-ribitylamino)uracil = 6,7-dimethyl-8-(1-D-ribityl)lumazine + phosphate + 2 H2O + H(+). It functions in the pathway cofactor biosynthesis; riboflavin biosynthesis; riboflavin from 2-hydroxy-3-oxobutyl phosphate and 5-amino-6-(D-ribitylamino)uracil: step 1/2. In terms of biological role, catalyzes the formation of 6,7-dimethyl-8-ribityllumazine by condensation of 5-amino-6-(D-ribitylamino)uracil with 3,4-dihydroxy-2-butanone 4-phosphate. This is the penultimate step in the biosynthesis of riboflavin. The protein is 6,7-dimethyl-8-ribityllumazine synthase of Pectobacterium carotovorum subsp. carotovorum (strain PC1).